The primary structure comprises 339 residues: Glycerol-3-phosphate dehydrogenase [NAD(P)+] (339 aa).

NADPH is bound by residues S15, Y16, H36, and K110. Sn-glycerol 3-phosphate-binding residues include K110, G139, and T141. A143 lines the NADPH pocket. K195, D248, S258, R259, and N260 together coordinate sn-glycerol 3-phosphate. K195 functions as the Proton acceptor in the catalytic mechanism. R259 provides a ligand contact to NADPH. Residues V283 and E285 each contribute to the NADPH site.

This sequence belongs to the NAD-dependent glycerol-3-phosphate dehydrogenase family.

The protein resides in the cytoplasm. It catalyses the reaction sn-glycerol 3-phosphate + NAD(+) = dihydroxyacetone phosphate + NADH + H(+). It carries out the reaction sn-glycerol 3-phosphate + NADP(+) = dihydroxyacetone phosphate + NADPH + H(+). The protein operates within membrane lipid metabolism; glycerophospholipid metabolism. In terms of biological role, catalyzes the reduction of the glycolytic intermediate dihydroxyacetone phosphate (DHAP) to sn-glycerol 3-phosphate (G3P), the key precursor for phospholipid synthesis. The sequence is that of Glycerol-3-phosphate dehydrogenase [NAD(P)+] from Shigella boydii serotype 18 (strain CDC 3083-94 / BS512).